A 146-amino-acid polypeptide reads, in one-letter code: Cyanate hydratase (146 aa).

Active-site residues include Arg87, Glu90, and Ser113.

Belongs to the cyanase family.

It catalyses the reaction cyanate + hydrogencarbonate + 3 H(+) = NH4(+) + 2 CO2. Functionally, catalyzes the reaction of cyanate with bicarbonate to produce ammonia and carbon dioxide. This chain is Cyanate hydratase, found in Synechococcus elongatus (strain ATCC 33912 / PCC 7942 / FACHB-805) (Anacystis nidulans R2).